A 299-amino-acid chain; its full sequence is uncharacterized protein (299 aa).

Residues 4 to 20 (LFFIFVMLIVLLCGCTS) traverse the membrane as a helical segment.

The protein resides in the membrane. This is an uncharacterized protein from Methanocaldococcus jannaschii (strain ATCC 43067 / DSM 2661 / JAL-1 / JCM 10045 / NBRC 100440) (Methanococcus jannaschii).